A 349-amino-acid polypeptide reads, in one-letter code: tRNA pseudouridine synthase D (349 aa).

Phe27 contacts substrate. The Nucleophile role is filled by Asp80. Asn129 serves as a coordination point for substrate. Positions 155-303 constitute a TRUD domain; that stretch reads GVPNYFGAQR…VEASRRAMLL (149 aa). Phe329 is a binding site for substrate.

This sequence belongs to the pseudouridine synthase TruD family.

It carries out the reaction uridine(13) in tRNA = pseudouridine(13) in tRNA. Functionally, responsible for synthesis of pseudouridine from uracil-13 in transfer RNAs. This is tRNA pseudouridine synthase D from Salmonella newport (strain SL254).